Here is a 341-residue protein sequence, read N- to C-terminus: Short chain dehydrogenase FGM9 (341 aa).

NADP(+) is bound by residues leucine 38, lysine 63, aspartate 88, and asparagine 114. Active-site proton donor residues include serine 167 and tyrosine 200. NADP(+) is bound by residues tyrosine 200 and lysine 204. The active-site Lowers pKa of active site Tyr is the lysine 204.

It belongs to the short-chain dehydrogenases/reductases (SDR) family.

Its pathway is secondary metabolite biosynthesis. Functionally, short chain dehydrogenase; part of the Fg3_54/C64 gene cluster that mediates the biosynthesis of the octapeptide fusaoctaxin A, a virulence factor that is required for cell-to-cell invasiveness of plant host. The 2 nonribosomal peptide synthetases NRPS9 and NRPS5 form an assembly line which likely utilizes GABA as a starter unit (loaded on the unique module M1 of NRPS9) and sequentially incorporates seven extender units composed of the residues L-Ala, L-allo-Ile, L-Ser, L-Val, L-Ser, L-Leu and L-Leu, respectively. During the process, each of the residues that are tethered on modules M3-M7 of NRPS5 containing an E domain can undergo an epimerization reaction to produce a D-configuration before the transpeptidation reaction occurs. The elongation of the peptidyl chain might be terminated by module M8-mediated L-Leu incorporation, followed by R domain-catalyzed 4 electron reduction to release the resulting octapeptide from the assembly line as an alcohol. Fusaoctaxin A is cleaved by the cluster specific ABC transporter FGM5 to the pentapeptide fusapentaxin A and the tripeptide fusatrixin A. The other enzymes from the cluster, FGM1, FGM2, FGM3 and FGM9 seem not to be involved in the biosynthesis of fusaoctaxin A and their functions have still to be determined. The protein is Short chain dehydrogenase FGM9 of Gibberella zeae (strain ATCC MYA-4620 / CBS 123657 / FGSC 9075 / NRRL 31084 / PH-1) (Wheat head blight fungus).